A 276-amino-acid chain; its full sequence is Large ribosomal subunit protein uL2 (276 aa).

The interval 224 to 276 (AMNPIDHPHGGGEGKTSGGRNPVTPWGVPTKGKKTRKRNKSSNKYIKRVSDKG) is disordered. The segment covering 254-270 (KGKKTRKRNKSSNKYIK) has biased composition (basic residues).

It belongs to the universal ribosomal protein uL2 family. In terms of assembly, part of the 50S ribosomal subunit. Forms a bridge to the 30S subunit in the 70S ribosome.

In terms of biological role, one of the primary rRNA binding proteins. Required for association of the 30S and 50S subunits to form the 70S ribosome, for tRNA binding and peptide bond formation. It has been suggested to have peptidyltransferase activity; this is somewhat controversial. Makes several contacts with the 16S rRNA in the 70S ribosome. The sequence is that of Large ribosomal subunit protein uL2 from Ehrlichia chaffeensis (strain ATCC CRL-10679 / Arkansas).